Here is a 127-residue protein sequence, read N- to C-terminus: Glycine cleavage system H protein (127 aa).

The Lipoyl-binding domain maps to 24-105; that stretch reads TLTVGVTDHA…AYAAWLFKLK (82 aa). N6-lipoyllysine is present on lysine 65.

This sequence belongs to the GcvH family. The glycine cleavage system is composed of four proteins: P, T, L and H. The cofactor is (R)-lipoate.

The glycine cleavage system catalyzes the degradation of glycine. The H protein shuttles the methylamine group of glycine from the P protein to the T protein. The polypeptide is Glycine cleavage system H protein (Azoarcus sp. (strain BH72)).